The primary structure comprises 424 residues: Serine--tRNA ligase (424 aa).

L-serine is bound at residue 230-232 (TAE). An ATP-binding site is contributed by 261 to 263 (RSE). An L-serine-binding site is contributed by Glu-284. 348-351 (EISS) lines the ATP pocket. Ser-384 serves as a coordination point for L-serine.

The protein belongs to the class-II aminoacyl-tRNA synthetase family. Type-1 seryl-tRNA synthetase subfamily. Homodimer. The tRNA molecule binds across the dimer.

The protein resides in the cytoplasm. It catalyses the reaction tRNA(Ser) + L-serine + ATP = L-seryl-tRNA(Ser) + AMP + diphosphate + H(+). It carries out the reaction tRNA(Sec) + L-serine + ATP = L-seryl-tRNA(Sec) + AMP + diphosphate + H(+). The protein operates within aminoacyl-tRNA biosynthesis; selenocysteinyl-tRNA(Sec) biosynthesis; L-seryl-tRNA(Sec) from L-serine and tRNA(Sec): step 1/1. Its function is as follows. Catalyzes the attachment of serine to tRNA(Ser). Is also able to aminoacylate tRNA(Sec) with serine, to form the misacylated tRNA L-seryl-tRNA(Sec), which will be further converted into selenocysteinyl-tRNA(Sec). The polypeptide is Serine--tRNA ligase (Streptococcus pneumoniae (strain Hungary19A-6)).